A 280-amino-acid polypeptide reads, in one-letter code: Putative aquaporin-10 (280 aa).

The Cytoplasmic portion of the chain corresponds to 1–8 (MEAVSSEY). Residues 9–29 (YFPLYSALGYFALVFGIGEIA) form a helical membrane-spanning segment. Residues 30–64 (RIITAKYVSPRGNSQLFLYELIGTIQMCTCVYENG) are Extracellular-facing. A helical transmembrane segment spans residues 65–85 (IIFKNYGFPAIFICVALLLTA). Topologically, residues 86–114 (GNIFNRGAMTNCAPIFEQFVFGNLGSSKF) are cytoplasmic. The helical transmembrane segment at 115 to 135 (LTILSAQLIGATFASKFAYLI) threads the bilayer. Residues 136–164 (WNITAPYSTAHLENASNLECILHYKQTAG) lie on the Extracellular side of the membrane. A helical transmembrane segment spans residues 165-185 (IVIGFEIVGAFVVRIVVAQLL). Residues 186 to 193 (ARPALIKL) are Cytoplasmic-facing. A helical transmembrane segment spans residues 194–214 (IPFAISAYLSLALYVVGVPGL). Residues 215–233 (NPIVATARLYGCRGIDNSS) lie on the Extracellular side of the membrane. Residues 234-254 (FFILYWFCPVLGWLTGAYVVG) form a helical membrane-spanning segment. Topologically, residues 255 to 280 (QKSPSKKSAKDVKAEKKAKAAAKKSD) are cytoplasmic. The interval 256–280 (KSPSKKSAKDVKAEKKAKAAAKKSD) is disordered. Over residues 262-280 (SAKDVKAEKKAKAAAKKSD) the composition is skewed to basic and acidic residues.

This sequence belongs to the MIP/aquaporin (TC 1.A.8) family.

Its subcellular location is the membrane. This Caenorhabditis elegans protein is Putative aquaporin-10 (aqp-10).